A 61-amino-acid chain; its full sequence is AGVDPLVPLRQAMFNYFQVPDRLGILTHLYRIAEGAQQGDPLSRSWELLKEGFLLALTQGR.

Tyr-30 carries the post-translational modification Phosphotyrosine. Ser-45 serves as a coordination point for ATP.

Belongs to the eukaryotic-type N-acetylglucosamine kinase family. In terms of assembly, homodimer.

The enzyme catalyses N-acetyl-D-glucosamine + ATP = N-acetyl-D-glucosamine 6-phosphate + ADP + H(+). The catalysed reaction is aldehydo-N-acetyl-D-mannosamine + ATP = aldehydo-N-acetyl-D-mannosamine 6-phosphate + ADP + H(+). It catalyses the reaction N-acetyl-D-muramoyl-L-alanyl-D-isoglutamine + ATP = 6-O-phospho-N-acetyl-D-muramoyl-L-alanyl-D-isoglutamine + ADP + H(+). It functions in the pathway amino-sugar metabolism; N-acetylneuraminate degradation. In terms of biological role, converts endogenous N-acetylglucosamine (GlcNAc), a major component of complex carbohydrates, from lysosomal degradation or nutritional sources into GlcNAc 6-phosphate. Also has N-acetylmannosamine (ManNAc) kinase activity. Involved in the N-glycolylneuraminic acid (Neu5Gc) degradation pathway. Also involved in innate immunity by promoting detection of bacterial peptidoglycan by NOD2: acts by catalyzing phosphorylation of muramyl dipeptide (MDP), a fragment of bacterial peptidoglycan, to generate 6-O-phospho-muramyl dipeptide, which acts as a direct ligand for NOD2. This chain is N-acetyl-D-glucosamine kinase, found in Mesocricetus auratus (Golden hamster).